We begin with the raw amino-acid sequence, 333 residues long: Phosphate acyltransferase (333 aa).

The protein belongs to the PlsX family. As to quaternary structure, homodimer. Probably interacts with PlsY.

Its subcellular location is the cytoplasm. The catalysed reaction is a fatty acyl-[ACP] + phosphate = an acyl phosphate + holo-[ACP]. It participates in lipid metabolism; phospholipid metabolism. Functionally, catalyzes the reversible formation of acyl-phosphate (acyl-PO(4)) from acyl-[acyl-carrier-protein] (acyl-ACP). This enzyme utilizes acyl-ACP as fatty acyl donor, but not acyl-CoA. This is Phosphate acyltransferase from Helicobacter hepaticus (strain ATCC 51449 / 3B1).